The primary structure comprises 317 residues: D-alanine--D-alanine ligase (317 aa).

The ATP-grasp domain occupies 111–308 (KRFWNGIGIP…YASLVEKIAQ (198 aa)). Position 137–192 (137–192 (EEQMSYPVIVKPSREGSTIGINKAMNRAELDDALIKALEYDSDILVEEFIDGPEFT)) interacts with ATP. The Mg(2+) site is built by D262, E275, and N277.

It belongs to the D-alanine--D-alanine ligase family. It depends on Mg(2+) as a cofactor. Mn(2+) is required as a cofactor.

It is found in the cytoplasm. It catalyses the reaction 2 D-alanine + ATP = D-alanyl-D-alanine + ADP + phosphate + H(+). It functions in the pathway cell wall biogenesis; peptidoglycan biosynthesis. Cell wall formation. This Marinomonas sp. (strain MWYL1) protein is D-alanine--D-alanine ligase.